The primary structure comprises 170 residues: Probable chemoreceptor glutamine deamidase CheD (170 aa).

Belongs to the CheD family.

The catalysed reaction is L-glutaminyl-[protein] + H2O = L-glutamyl-[protein] + NH4(+). In terms of biological role, probably deamidates glutamine residues to glutamate on methyl-accepting chemotaxis receptors (MCPs), playing an important role in chemotaxis. This is Probable chemoreceptor glutamine deamidase CheD from Maridesulfovibrio salexigens (strain ATCC 14822 / DSM 2638 / NCIMB 8403 / VKM B-1763) (Desulfovibrio salexigens).